The following is a 731-amino-acid chain: 1,4-alpha-glucan branching enzyme GlgB (731 aa).

D411 acts as the Nucleophile in catalysis. E464 acts as the Proton donor in catalysis.

It belongs to the glycosyl hydrolase 13 family. GlgB subfamily. As to quaternary structure, monomer.

It catalyses the reaction Transfers a segment of a (1-&gt;4)-alpha-D-glucan chain to a primary hydroxy group in a similar glucan chain.. It participates in glycan biosynthesis; glycogen biosynthesis. Functionally, catalyzes the formation of the alpha-1,6-glucosidic linkages in glycogen by scission of a 1,4-alpha-linked oligosaccharide from growing alpha-1,4-glucan chains and the subsequent attachment of the oligosaccharide to the alpha-1,6 position. The chain is 1,4-alpha-glucan branching enzyme GlgB from Mycobacterium tuberculosis (strain ATCC 25177 / H37Ra).